Reading from the N-terminus, the 295-residue chain is Ent-pimara-9(11),15-diene synthase (295 aa).

Belongs to the terpene synthase family. In terms of assembly, monomer. The cofactor is a divalent metal cation.

The enzyme catalyses ent-copalyl diphosphate = ent-pimara-9(11),15-diene + diphosphate. It participates in antibiotic biosynthesis. Involved in viguiepinol biosynthesis. Catalyzes the conversion of copalyl diphosphate (ent-CDP) into pimara-9(11),15-diene (PMD). The polypeptide is Ent-pimara-9(11),15-diene synthase (Streptomyces sp. (strain KO-3988)).